The chain runs to 745 residues: Immunoglobulin superfamily containing leucine-rich repeat protein 2 (745 aa).

The signal sequence occupies residues 1–18 (MFPLRALWLVWALLGVAG). One can recognise an LRRNT domain in the interval 19–51 (SCPEPCACVDKYAHQFADCAYKELREVPEGLPA). The Extracellular portion of the chain corresponds to 19 to 589 (SCPEPCACVD…VFSTKKELPS (571 aa)). N-linked (GlcNAc...) asparagine glycosylation occurs at asparagine 52. 5 LRR repeats span residues 52–73 (NVTT…AFAD), 76–97 (QVTS…ALAV), 100–123 (QLKN…RNLS), 124–145 (ALQL…ALGA), and 148–169 (DLRS…TFDA). Asparagine 121 carries an N-linked (GlcNAc...) asparagine glycan. One can recognise an LRRCT domain in the interval 181–232 (NPFHCGCGLVWLQAWAASTRVSLPEPDSIACASPPALQGVPVYRLPALPCAP). One can recognise an Ig-like domain in the interval 233–371 (PSVHLSAEPP…GANSTSIRVA (139 aa)). Cysteines 260 and 355 form a disulfide. The interval 287 to 326 (VLSGEDDGVGAEEGEGEGDGDLLTQTQAQTPTPAPAWPAP) is disordered. The segment covering 290–306 (GEDDGVGAEEGEGEGDG) has biased composition (acidic residues). 2 N-linked (GlcNAc...) asparagine glycosylation sites follow: asparagine 337 and asparagine 364. Residues 375–466 (TGPPKHAPGA…QRCGNGDPSR (92 aa)) form a disordered region. Over residues 431–449 (TETEPEEDTSEGEEAEDQI) the composition is skewed to acidic residues. Residues asparagine 474 and asparagine 563 are each glycosylated (N-linked (GlcNAc...) asparagine). Residues 590–610 (LLVIVAVSVFLLVLATVPLLG) traverse the membrane as a helical segment. Over 611 to 745 (AACCHLLAKH…INGNYRQTAG (135 aa)) the chain is Cytoplasmic. A disordered region spans residues 656–722 (KSYPAGGEAG…FEAGSEYSDR (67 aa)). Residues 665 to 683 (GGEEPEDVQGEGLDEDAEQ) are compositionally biased toward acidic residues. Position 719 is a phosphotyrosine (tyrosine 719). Serine 720 carries the post-translational modification Phosphoserine.

Homomultimer. Interacts with NTRK1/TrkA.

It localises to the cell membrane. In terms of biological role, required for axon extension during neural development. The chain is Immunoglobulin superfamily containing leucine-rich repeat protein 2 (ISLR2) from Homo sapiens (Human).